A 146-amino-acid polypeptide reads, in one-letter code: Ataxin-7-like protein 1 (146 aa).

2 disordered regions span residues 1–27 and 125–146; these read MTSE…QEGT and KRNA…QRQV. The span at 127–138 shows a compositional bias: polar residues; sequence NASISWSGAESR.

This is Ataxin-7-like protein 1 (Atxn7l1) from Mus musculus (Mouse).